Here is a 492-residue protein sequence, read N- to C-terminus: Catalase isozyme 2 (492 aa).

Residues His65 and Asn138 contribute to the active site. Heme is bound at residue Tyr348.

Belongs to the catalase family. In terms of assembly, homotetramer. The cofactor is heme.

The protein resides in the peroxisome. It localises to the glyoxysome. The enzyme catalyses 2 H2O2 = O2 + 2 H2O. In terms of biological role, occurs in almost all aerobically respiring organisms and serves to protect cells from the toxic effects of hydrogen peroxide. The sequence is that of Catalase isozyme 2 (CAT2) from Solanum tuberosum (Potato).